The chain runs to 344 residues: Methionine import ATP-binding protein MetN (344 aa).

One can recognise an ABC transporter domain in the interval 2–241 (IEINQVNKVF…PKTELAHDFI (240 aa)). An ATP-binding site is contributed by 38-45 (GSSGAGKS).

The protein belongs to the ABC transporter superfamily. Methionine importer (TC 3.A.1.24) family. The complex is composed of two ATP-binding proteins (MetN), two transmembrane proteins (MetI) and a solute-binding protein (MetQ).

Its subcellular location is the cell inner membrane. The catalysed reaction is L-methionine(out) + ATP + H2O = L-methionine(in) + ADP + phosphate + H(+). The enzyme catalyses D-methionine(out) + ATP + H2O = D-methionine(in) + ADP + phosphate + H(+). Part of the ABC transporter complex MetNIQ involved in methionine import. Responsible for energy coupling to the transport system. This chain is Methionine import ATP-binding protein MetN, found in Vibrio vulnificus (strain YJ016).